We begin with the raw amino-acid sequence, 504 residues long: uncharacterized protein (504 aa).

This is an uncharacterized protein from Klebsiella pneumoniae.